The chain runs to 709 residues: UV-stimulated scaffold protein A (709 aa).

Residues 1–10 (MDQKLSKLVE) are compositionally biased toward basic and acidic residues. Positions 1 to 20 (MDQKLSKLVEELTTSGEPRL) are disordered. Positions 2–145 (DQKLSKLVEE…HFLRHNKKVD (144 aa)) are VHS-like. A coiled-coil region spans residues 165–199 (KHLDKIYQERASQAEREMQEMSGEIESCLTEVESC). Disordered stretches follow at residues 230–289 (SCAG…DSDL) and 386–406 (EGGE…EDDE). Residues 280–289 (PSDEDEDSDL) are compositionally biased toward acidic residues. Phosphoserine occurs at positions 281 and 287. The span at 386 to 395 (EGGERRRTEA) shows a compositional bias: basic and acidic residues. Residues 397–406 (GDAEEDEDDE) show a composition bias toward acidic residues. Residue Lys414 forms a Glycyl lysine isopeptide (Lys-Gly) (interchain with G-Cter in ubiquitin) linkage. Residues 469–495 (DHLPPPSSASPSRALPEPQEAQKLAAE) are disordered. Low complexity predominate over residues 477–486 (ASPSRALPEP). The UVSSA-type zinc finger occupies 564-591 (QHWCRAPRPDGRLCERQDRLKCPFHGKI). Zn(2+)-binding residues include Cys567, Cys577, Cys585, and His588. The disordered stretch occupies residues 588–655 (HGKIVPRDDE…GKGRGKKRRY (68 aa)). Residues 592-632 (VPRDDEGRPLDPEDRAREQRRQLQKQERPEWQDPELMRDVE) are compositionally biased toward basic and acidic residues. The span at 646-655 (GKGRGKKRRY) shows a compositional bias: basic residues.

The protein belongs to the UVSSA family. In terms of assembly, interacts with the elongating form of RNA polymerase II (RNA pol IIo) during transcription stress. Interacts with the TFIIH complex during transcription stress. Interacts with ERCC6. Interacts with ERCC8. Interacts with USP7. Post-translationally, monoubiquitinated at Lys-414 in response to transcription stress; this promotes efficient transfer of TFIIH to stalled RNA polymerase II.

It localises to the chromosome. Functionally, factor involved in transcription-coupled nucleotide excision repair (TC-NER), a mechanism that rapidly removes RNA polymerase II-blocking lesions from the transcribed strand of active genes. Acts as a key adapter that promotes recruitment of factors involved in TC-NER. Facilitates the ubiquitination of the elongating form of RNA polymerase II (RNA pol IIo) at DNA damage sites, thereby promoting RNA pol IIo backtracking and access by the TC-NER machinery to lesion sites. Also promotes stabilization of ERCC6/CSB by recruiting deubiquitinating enzyme USP7 to TC-NER complexes, preventing UV-induced degradation of ERCC6 by the proteasome. Mediates the recruitment of the TFIIH complex and other factors that are required for nucleotide excision repair to RNA polymerase II. Also required to inactivate stalled RNA polymerase II by blocking the access of TCEA1/TFIIS, thereby preventing reactivation of RNA polymerase II. Not involved in processing oxidative damage. This chain is UV-stimulated scaffold protein A, found in Homo sapiens (Human).